We begin with the raw amino-acid sequence, 220 residues long: MEAFLQRIASRLGRDVRTSVERPQWKHAPQQTVFQGYSQNELLDVLKQQCTRIHTTFVETNSAELRDTLQQVIAAHGGGPIVVANDERYEQFGLSSFLQREDVYVWDATRGRDNIEAAERANIGMTWSDITLAESGTVVLLNNRDQGRTISFLPTTYVALIPKSTIVPRMTQAAHIIREKHVPSCINFITGPSNSADIEMNLVVGVHGPVKATYIVITDR.

The protein belongs to the LutC/YkgG family.

Its function is as follows. Is involved in L-lactate degradation and allows cells to grow with lactate as the sole carbon source. This is Lactate utilization protein C from Anoxybacillus flavithermus (strain DSM 21510 / WK1).